The chain runs to 206 residues: ATP phosphoribosyltransferase (206 aa).

This sequence belongs to the ATP phosphoribosyltransferase family. Short subfamily. As to quaternary structure, heteromultimer composed of HisG and HisZ subunits.

The protein resides in the cytoplasm. The enzyme catalyses 1-(5-phospho-beta-D-ribosyl)-ATP + diphosphate = 5-phospho-alpha-D-ribose 1-diphosphate + ATP. The protein operates within amino-acid biosynthesis; L-histidine biosynthesis; L-histidine from 5-phospho-alpha-D-ribose 1-diphosphate: step 1/9. Functionally, catalyzes the condensation of ATP and 5-phosphoribose 1-diphosphate to form N'-(5'-phosphoribosyl)-ATP (PR-ATP). Has a crucial role in the pathway because the rate of histidine biosynthesis seems to be controlled primarily by regulation of HisG enzymatic activity. The sequence is that of ATP phosphoribosyltransferase from Leptospira interrogans serogroup Icterohaemorrhagiae serovar copenhageni (strain Fiocruz L1-130).